A 282-amino-acid chain; its full sequence is Biotin synthase (282 aa).

Residues 1–230 form the Radical SAM core domain; that stretch reads MSDNKIYLCA…NQMLMIAGGR (230 aa). Positions 19, 23, and 26 each coordinate [4Fe-4S] cluster. [2Fe-2S] cluster is bound by residues Cys63, Cys98, and Cys156.

This sequence belongs to the radical SAM superfamily. Biotin synthase family. As to quaternary structure, homodimer. It depends on [4Fe-4S] cluster as a cofactor. Requires [2Fe-2S] cluster as cofactor.

It catalyses the reaction (4R,5S)-dethiobiotin + (sulfur carrier)-SH + 2 reduced [2Fe-2S]-[ferredoxin] + 2 S-adenosyl-L-methionine = (sulfur carrier)-H + biotin + 2 5'-deoxyadenosine + 2 L-methionine + 2 oxidized [2Fe-2S]-[ferredoxin]. Its pathway is cofactor biosynthesis; biotin biosynthesis; biotin from 7,8-diaminononanoate: step 2/2. In terms of biological role, catalyzes the conversion of dethiobiotin (DTB) to biotin by the insertion of a sulfur atom into dethiobiotin via a radical-based mechanism. This Aliarcobacter butzleri (strain RM4018) (Arcobacter butzleri) protein is Biotin synthase.